We begin with the raw amino-acid sequence, 678 residues long: Penicillin-binding protein activator LpoA (678 aa).

The signal sequence occupies residues 1–26 (MVPSTFSRLKAARCLPVVLAALIFAG). Cys-27 carries the N-palmitoyl cysteine lipid modification. Cys-27 is lipidated: S-diacylglycerol cysteine. Disordered regions lie at residues 304 to 338 (AEQP…SVPV) and 495 to 530 (IALT…QFTN). Residues 513–529 (TTNNPTLQTTPTDDQFT) show a composition bias toward low complexity.

The protein belongs to the LpoA family. In terms of assembly, interacts with PBP1a.

The protein resides in the cell outer membrane. Its function is as follows. Regulator of peptidoglycan synthesis that is essential for the function of penicillin-binding protein 1A (PBP1a). This chain is Penicillin-binding protein activator LpoA, found in Escherichia coli O6:H1 (strain CFT073 / ATCC 700928 / UPEC).